Here is a 513-residue protein sequence, read N- to C-terminus: Aspartic proteinase A2 (513 aa).

The N-terminal stretch at Met1–Ser24 is a signal peptide. Positions Lys25–Gly71 are cleaved as a propeptide — activation peptide. In terms of domain architecture, Peptidase A1 spans Tyr89–Ala510. Asp107 is a catalytic residue. 2 disulfides stabilise this stretch: Cys120-Cys126 and Cys285-Cys289. Residue Asp294 is part of the active site. The Saposin B-type domain occupies Val319 to Pro424. Cystine bridges form between Cys324–Cys418, Cys349–Cys390, Cys355–Cys387, and Cys432–Cys469. Asn404 carries an N-linked (GlcNAc...) asparagine glycan.

The protein belongs to the peptidase A1 family. Expressed in seed pods and dry seeds.

It localises to the vacuole. In terms of biological role, involved in the breakdown of propeptides of storage proteins in protein-storage vacuoles. This chain is Aspartic proteinase A2 (APA2), found in Arabidopsis thaliana (Mouse-ear cress).